A 342-amino-acid polypeptide reads, in one-letter code: Signal-regulatory protein beta-2 (342 aa).

Positions 1-32 (MCSTMSAPTCLAHLPPCFLLLALVLVPSDASG) are cleaved as a signal peptide. 2 consecutive Ig-like V-type domains span residues 33–143 (QSSR…KSDE) and 157–258 (PDLW…SGQG). The Extracellular segment spans residues 33-287 (QSSRNDWQVL…EPATEMSPTG (255 aa)). A disulfide bridge links cysteine 60 with cysteine 127. Asparagine 116, asparagine 179, and asparagine 231 each carry an N-linked (GlcNAc...) asparagine glycan. Cysteine 180 and cysteine 242 are disulfide-bonded. A helical transmembrane segment spans residues 288-308 (LLVVFAPVVLGLKAITLAALL). The Cytoplasmic segment spans residues 309–342 (LALATSRRSPGQEDVKTTGPAGAMNTLAWSKGQE). The interval 317-342 (SPGQEDVKTTGPAGAMNTLAWSKGQE) is disordered.

The protein localises to the membrane. The sequence is that of Signal-regulatory protein beta-2 (SIRPB2) from Homo sapiens (Human).